A 559-amino-acid chain; its full sequence is Kelch repeat and BTB domain-containing protein 2 (559 aa).

Positions 26–95 constitute a BTB domain; sequence CDVIITIGDG…LYNRHISSMN (70 aa). The 96-residue stretch at 128–223 folds into the BACK domain; the sequence is CIYIYHRLYE…CIDIQNLDKK (96 aa). Kelch repeat units follow at residues 305–352, 353–399, and 401–463; these read EIII…VIDD, MIYA…VFDQ, and IYII…SHKD.

Interacts (via BTB domain) with host CUL3.

It localises to the host cytoplasm. In terms of biological role, probable substrate-specific adapter of CUL3-containing E3 ubiquitin-protein ligases which mediate the ubiquitination and subsequent proteasomal degradation of host target proteins. This Mus musculus (Mouse) protein is Kelch repeat and BTB domain-containing protein 2 (KBTB2).